We begin with the raw amino-acid sequence, 382 residues long: Chorismate synthase (382 aa).

Residues Arg-39 and Arg-45 each coordinate NADP(+). FMN is bound by residues 128–130 (RAS), 246–247 (QA), Ala-290, 305–309 (KPIAT), and Arg-331.

This sequence belongs to the chorismate synthase family. In terms of assembly, homotetramer. It depends on FMNH2 as a cofactor.

It carries out the reaction 5-O-(1-carboxyvinyl)-3-phosphoshikimate = chorismate + phosphate. The protein operates within metabolic intermediate biosynthesis; chorismate biosynthesis; chorismate from D-erythrose 4-phosphate and phosphoenolpyruvate: step 7/7. Functionally, catalyzes the anti-1,4-elimination of the C-3 phosphate and the C-6 proR hydrogen from 5-enolpyruvylshikimate-3-phosphate (EPSP) to yield chorismate, which is the branch point compound that serves as the starting substrate for the three terminal pathways of aromatic amino acid biosynthesis. This reaction introduces a second double bond into the aromatic ring system. The sequence is that of Chorismate synthase from Deinococcus geothermalis (strain DSM 11300 / CIP 105573 / AG-3a).